A 198-amino-acid chain; its full sequence is Probable GTP-binding protein EngB (198 aa).

Residues 22–195 (DLPEIALAGR…WKAIHKFTKT (174 aa)) form the EngB-type G domain. GTP is bound by residues 30 to 37 (GRSNVGKS), 57 to 61 (GKTQT), 75 to 78 (DVPG), 142 to 145 (TKAD), and 174 to 176 (FSS). The Mg(2+) site is built by Ser-37 and Thr-59.

It belongs to the TRAFAC class TrmE-Era-EngA-EngB-Septin-like GTPase superfamily. EngB GTPase family. It depends on Mg(2+) as a cofactor.

In terms of biological role, necessary for normal cell division and for the maintenance of normal septation. The sequence is that of Probable GTP-binding protein EngB from Bacillus cytotoxicus (strain DSM 22905 / CIP 110041 / 391-98 / NVH 391-98).